The sequence spans 156 residues: Endoribonuclease YbeY (156 aa).

The Zn(2+) site is built by H122, H126, and H132.

It belongs to the endoribonuclease YbeY family. The cofactor is Zn(2+).

The protein resides in the cytoplasm. Single strand-specific metallo-endoribonuclease involved in late-stage 70S ribosome quality control and in maturation of the 3' terminus of the 16S rRNA. The polypeptide is Endoribonuclease YbeY (Bacillus cereus (strain B4264)).